A 129-amino-acid chain; its full sequence is Urease subunit beta (129 aa).

This sequence belongs to the urease beta subunit family. In terms of assembly, heterotrimer of UreA (gamma), UreB (beta) and UreC (alpha) subunits. Three heterotrimers associate to form the active enzyme.

The protein resides in the cytoplasm. It carries out the reaction urea + 2 H2O + H(+) = hydrogencarbonate + 2 NH4(+). It functions in the pathway nitrogen metabolism; urea degradation; CO(2) and NH(3) from urea (urease route): step 1/1. In Photorhabdus laumondii subsp. laumondii (strain DSM 15139 / CIP 105565 / TT01) (Photorhabdus luminescens subsp. laumondii), this protein is Urease subunit beta.